The following is a 925-amino-acid chain: Alanine--tRNA ligase (925 aa).

Positions 611, 615, 714, and 718 each coordinate Zn(2+).

The protein belongs to the class-II aminoacyl-tRNA synthetase family. The cofactor is Zn(2+).

It localises to the cytoplasm. The enzyme catalyses tRNA(Ala) + L-alanine + ATP = L-alanyl-tRNA(Ala) + AMP + diphosphate. Catalyzes the attachment of alanine to tRNA(Ala) in a two-step reaction: alanine is first activated by ATP to form Ala-AMP and then transferred to the acceptor end of tRNA(Ala). Also edits incorrectly charged Ser-tRNA(Ala) and Gly-tRNA(Ala) via its editing domain. This is Alanine--tRNA ligase from Methanosarcina acetivorans (strain ATCC 35395 / DSM 2834 / JCM 12185 / C2A).